The sequence spans 519 residues: Protein amnionless (519 aa).

The signal sequence occupies residues Met-1–Ala-19. Residues Ala-20–Met-430 are Extracellular-facing. N-linked (GlcNAc...) asparagine glycans are attached at residues Asn-35 and Asn-39. Intrachain disulfides connect Cys-43–Cys-152, Cys-193–Cys-267, Cys-259–Cys-265, Cys-277–Cys-303, Cys-288–Cys-304, and Cys-293–Cys-307. The interval Ser-67–Ala-143 is interaction with CUBN. Positions Pro-256–Gly-308 constitute a VWFC domain. A helical transmembrane segment spans residues Gly-431–Leu-451. Residues Arg-452 to Ala-519 are Cytoplasmic-facing.

Interacts (via extracellular region) with CUBN/cubilin, giving rise to a huge complex containing one AMN chain and three CUBN chains. Post-translationally, N-glycosylated. A soluble form arises by proteolytic removal of the membrane anchor. Detected in kidney cortex (at protein level).

It localises to the apical cell membrane. Its subcellular location is the cell membrane. The protein localises to the endosome membrane. It is found in the membrane. The protein resides in the coated pit. Its function is as follows. Membrane-bound component of the endocytic receptor formed by AMN and CUBN. Required for normal CUBN glycosylation and trafficking to the cell surface. The complex formed by AMN and CUBN is required for efficient absorption of vitamin B12. Required for normal CUBN-mediated protein transport in the kidney. In Sus scrofa (Pig), this protein is Protein amnionless (AMN).